Here is a 228-residue protein sequence, read N- to C-terminus: Phosphoglycolate phosphatase 1 (228 aa).

Asp-8 functions as the Nucleophile in the catalytic mechanism. Mg(2+) contacts are provided by Asp-8 and Asp-10. A substrate-binding site is contributed by Lys-149. Positions 172 and 176 each coordinate Mg(2+).

This sequence belongs to the archaeal SPP-like hydrolase family. Requires Mg(2+) as cofactor.

It catalyses the reaction 2-phosphoglycolate + H2O = glycolate + phosphate. Functionally, catalyzes the dephosphorylation of 2-phosphoglycolate. In Saccharolobus solfataricus (strain ATCC 35092 / DSM 1617 / JCM 11322 / P2) (Sulfolobus solfataricus), this protein is Phosphoglycolate phosphatase 1.